A 309-amino-acid polypeptide reads, in one-letter code: Ketosamine-3-kinase (309 aa).

Serine 20 carries the phosphoserine modification. Residue 89–91 coordinates ATP; it reads EHL. Catalysis depends on aspartate 217, which acts as the Proton acceptor.

The protein belongs to the fructosamine kinase family.

The enzyme catalyses N(6)-D-ribulosyl-L-lysyl-[protein] + ATP = N(6)-(3-O-phospho-D-ribulosyl)-L-lysyl-[protein] + ADP + H(+). The catalysed reaction is N(6)-(D-psicosyl)-L-lysyl-[protein] + ATP = N(6)-(3-O-phospho-D-psicosyl)-L-lysyl-[protein] + ADP + H(+). Its function is as follows. Ketosamine-3-kinase involved in protein deglycation by mediating phosphorylation of ribuloselysine and psicoselysine on glycated proteins, to generate ribuloselysine-3 phosphate and psicoselysine-3 phosphate, respectively. Ribuloselysine-3 phosphate and psicoselysine-3 phosphate adducts are unstable and decompose under physiological conditions. Not able to phosphorylate fructoselysine. The sequence is that of Ketosamine-3-kinase from Mus musculus (Mouse).